We begin with the raw amino-acid sequence, 377 residues long: Transcription factor ast-1 (377 aa).

Positions 72 to 143 (PNRMLYNDNT…SNGSSSSTES (72 aa)) are disordered. 2 stretches are compositionally biased toward low complexity: residues 96-109 (STSASSSGNSTSSK) and 118-142 (TESSNSSGNGAAATSGSNGSSSSTE). The segment at residues 214–294 (TQLWQFLLEL…HGKRYAYKFD (81 aa)) is a DNA-binding region (ETS).

Belongs to the ETS family. In terms of tissue distribution, expressed in the A-neurons in the male-specific genital sensilla (simple sense organs) known as rays.

It localises to the nucleus. Its subcellular location is the cell projection. It is found in the neuron projection. Its function is as follows. Transcription factor. Probably binds to DNA sequences containing the consensus motif 5'-CGGA[AT][AG]-3'. Positively modulates expression of dopamine pathway genes, acting as a terminal selector for differentiation of dopaminergic neurons; may act in concert with homeobox proteins ceh-40, ceh-43 and ceh-20. Required for axon navigation in some interneurons, perhaps acting in the same pathways as basement membrane protein nid-1 and unc-6/netrin. Plays a role in the differentiation of the ventral cord pioneer neuron AVG. Required for morphogenesis of the pharynx. This Caenorhabditis elegans protein is Transcription factor ast-1.